The chain runs to 570 residues: Sulfite reductase [NADPH] hemoprotein beta-component (570 aa).

[4Fe-4S] cluster-binding residues include Cys-434, Cys-440, Cys-479, and Cys-483. Cys-483 contacts siroheme.

The protein belongs to the nitrite and sulfite reductase 4Fe-4S domain family. In terms of assembly, alpha(8)-beta(8). The alpha component is a flavoprotein, the beta component is a hemoprotein. It depends on siroheme as a cofactor. [4Fe-4S] cluster is required as a cofactor.

It carries out the reaction hydrogen sulfide + 3 NADP(+) + 3 H2O = sulfite + 3 NADPH + 4 H(+). It functions in the pathway sulfur metabolism; hydrogen sulfide biosynthesis; hydrogen sulfide from sulfite (NADPH route): step 1/1. Functionally, component of the sulfite reductase complex that catalyzes the 6-electron reduction of sulfite to sulfide. This is one of several activities required for the biosynthesis of L-cysteine from sulfate. In Shigella dysenteriae serotype 1 (strain Sd197), this protein is Sulfite reductase [NADPH] hemoprotein beta-component.